A 333-amino-acid chain; its full sequence is Transcription initiation factor IIB (333 aa).

Residues 33–64 (EVYKCPICGNDKFVYNYERGEAVCIVCGAVVQ) form a TFIIB-type zinc finger. Zn(2+)-binding residues include Cys-37, Cys-40, Cys-56, and Cys-59. Tandem repeats lie at residues 149–232 (QELE…LREL) and 243–324 (LYIS…ELAK).

Belongs to the TFIIB family.

Stabilizes TBP binding to an archaeal box-A promoter. Also responsible for recruiting RNA polymerase II to the pre-initiation complex (DNA-TBP-TFIIB). The protein is Transcription initiation factor IIB of Pyrobaculum aerophilum (strain ATCC 51768 / DSM 7523 / JCM 9630 / CIP 104966 / NBRC 100827 / IM2).